Reading from the N-terminus, the 541-residue chain is Berberine bridge enzyme-like 24 (541 aa).

The N-terminal stretch at 1-32 (MGNSKPLPTISCIIVSVLYFSFYCITPTSSSA) is a signal peptide. Residues Cys41 and Cys105 are joined by a disulfide bond. Asn62 carries N-linked (GlcNAc...) asparagine glycosylation. Positions 83–259 (SMPKPGFIFR…LAWKIKLVPV (177 aa)) constitute an FAD-binding PCMH-type domain. Residues 120–184 (HDFEALSYVS…KIHGFPAGLC (65 aa)) constitute a cross-link (6-(S-cysteinyl)-8alpha-(pros-histidyl)-FAD (His-Cys)). Asn309, Asn408, and Asn435 each carry an N-linked (GlcNAc...) asparagine glycan.

This sequence belongs to the oxygen-dependent FAD-linked oxidoreductase family. Requires FAD as cofactor. Post-translationally, the FAD cofactor is bound via a bicovalent 6-S-cysteinyl, 8alpha-N1-histidyl FAD linkage.

The protein localises to the secreted. The protein resides in the cell wall. This Arabidopsis thaliana (Mouse-ear cress) protein is Berberine bridge enzyme-like 24.